We begin with the raw amino-acid sequence, 366 residues long: GTP cyclohydrolase 1 type 2 homolog (366 aa).

His-64, His-65, Asp-102, His-326, and Glu-329 together coordinate Zn(2+).

The protein belongs to the GTP cyclohydrolase I type 2/NIF3 family. In terms of assembly, homohexamer.

This is GTP cyclohydrolase 1 type 2 homolog from Staphylococcus aureus (strain MRSA252).